The primary structure comprises 526 residues: ATP synthase subunit alpha (526 aa).

171 to 178 lines the ATP pocket; the sequence is GDRQTGKT.

The protein belongs to the ATPase alpha/beta chains family. As to quaternary structure, F-type ATPases have 2 components, CF(1) - the catalytic core - and CF(0) - the membrane proton channel. CF(1) has five subunits: alpha(3), beta(3), gamma(1), delta(1), epsilon(1). CF(0) has three main subunits: a(1), b(2) and c(9-12). The alpha and beta chains form an alternating ring which encloses part of the gamma chain. CF(1) is attached to CF(0) by a central stalk formed by the gamma and epsilon chains, while a peripheral stalk is formed by the delta and b chains.

The protein localises to the cell inner membrane. The enzyme catalyses ATP + H2O + 4 H(+)(in) = ADP + phosphate + 5 H(+)(out). Functionally, produces ATP from ADP in the presence of a proton gradient across the membrane. The alpha chain is a regulatory subunit. This chain is ATP synthase subunit alpha, found in Cytophaga hutchinsonii (strain ATCC 33406 / DSM 1761 / CIP 103989 / NBRC 15051 / NCIMB 9469 / D465).